A 472-amino-acid chain; its full sequence is Eukaryotic translation initiation factor 2 subunit 3 (472 aa).

Alanine 2 is modified (N-acetylalanine; partial). Residue serine 16 is modified to Phosphoserine. One can recognise a tr-type G domain in the interval glutamine 39 to arginine 248. Positions glycine 48–serine 55 are G1. GTP is bound at residue alanine 51–threonine 56. The interval asparagine 76–lysine 80 is G2. Positions aspartate 134–glycine 137 are G3. GTP-binding positions include asparagine 190–aspartate 193 and serine 225–glutamine 227. The G4 stretch occupies residues asparagine 190–aspartate 193. Residues serine 225–glutamine 227 are G5. Residues glycine 457 to valine 469 form an interacts with CDC123 region.

The protein belongs to the TRAFAC class translation factor GTPase superfamily. Classic translation factor GTPase family. EIF2G subfamily. As to quaternary structure, eukaryotic translation initiation factor 2 eIF2 is a heterotrimeric complex composed of an alpha (EIF2S1), a beta (EIF2S2) and a gamma (EIF2S3) chain. eIF2 is member of the 43S pre-initiation complex (43S PIC). Interacts (via C-terminus) with CDC123; the interaction is direct. Expressed in testis, brain, liver and muscle.

It is found in the cytoplasm. Its subcellular location is the cytosol. The catalysed reaction is GTP + H2O = GDP + phosphate + H(+). Functionally, member of the eIF2 complex that functions in the early steps of protein synthesis by forming a ternary complex with GTP and initiator tRNA. This complex binds to a 40S ribosomal subunit, followed by mRNA binding to form the 43S pre-initiation complex (43S PIC). Junction of the 60S ribosomal subunit to form the 80S initiation complex is preceded by hydrolysis of the GTP bound to eIF2 and release of an eIF2-GDP binary complex. In order for eIF2 to recycle and catalyze another round of initiation, the GDP bound to eIF2 must exchange with GTP by way of a reaction catalyzed by eIF-2B. This Homo sapiens (Human) protein is Eukaryotic translation initiation factor 2 subunit 3 (EIF2S3).